The sequence spans 1081 residues: Serine/threonine-protein kinase PKH2 (1081 aa).

At serine 138 the chain carries Phosphoserine. The Protein kinase domain occupies phenylalanine 179–phenylalanine 443. ATP is bound by residues alanine 189–serine 191 and lysine 208. The tract at residues leucine 210–phenylalanine 255 is PIF-pocket. ATP contacts are provided by residues glutamate 258 to alanine 260 and aspartate 264. Aspartate 303 functions as the Proton acceptor in the catalytic mechanism. Residues glutamate 307 and aspartate 321 each coordinate ATP. A compositionally biased stretch (polar residues) spans histidine 494 to glutamate 526. 3 disordered regions span residues histidine 494–methionine 652, asparagine 805–serine 833, and isoleucine 970–alanine 1017. The span at isoleucine 527 to threonine 538 shows a compositional bias: basic and acidic residues. 2 stretches are compositionally biased toward low complexity: residues alanine 564–leucine 575 and serine 582–proline 602. A Phosphoserine modification is found at serine 619. Over residues proline 632–threonine 645 the composition is skewed to pro residues. Polar residues-rich tracts occupy residues asparagine 805–proline 819 and histidine 998–alanine 1017. Serine 1009 is modified (phosphoserine).

It belongs to the protein kinase superfamily. AGC Ser/Thr protein kinase family. PDPK1 subfamily.

It is found in the nucleus. Its subcellular location is the cytoplasm. The protein localises to the cell cortex. The catalysed reaction is L-seryl-[protein] + ATP = O-phospho-L-seryl-[protein] + ADP + H(+). It catalyses the reaction L-threonyl-[protein] + ATP = O-phospho-L-threonyl-[protein] + ADP + H(+). Sphingoid base activates kinase activity. Its function is as follows. Serine/threonine-protein kinase which is part sphingolipid-mediated signaling pathway that is required for the internalization step of endocytosis by regulating eisosome assembly and organization, and modulating the organization of the plasma membrane. Phosphorylates and activates PKC1. Activates YPK1 and YPK2, 2 components of signaling cascade required for maintenance of cell wall integrity. Required for stress-induced P-body assembly and regulates global mRNA decay at the deadenylation step. This is Serine/threonine-protein kinase PKH2 (PKH2) from Saccharomyces cerevisiae (strain ATCC 204508 / S288c) (Baker's yeast).